The following is a 95-amino-acid chain: Protein TusB (95 aa).

The protein belongs to the DsrH/TusB family. In terms of assembly, heterohexamer, formed by a dimer of trimers. The hexameric TusBCD complex contains 2 copies each of TusB, TusC and TusD. The TusBCD complex interacts with TusE.

It is found in the cytoplasm. Functionally, part of a sulfur-relay system required for 2-thiolation of 5-methylaminomethyl-2-thiouridine (mnm(5)s(2)U) at tRNA wobble positions. In Salmonella agona (strain SL483), this protein is Protein TusB.